The chain runs to 161 residues: 6,7-dimethyl-8-ribityllumazine synthase (161 aa).

5-amino-6-(D-ribitylamino)uracil-binding positions include tryptophan 26, 58–60 (SFE), and 81–83 (VVI). Position 86–87 (86–87 (GT)) interacts with (2S)-2-hydroxy-3-oxobutyl phosphate. The active-site Proton donor is histidine 89. Residue phenylalanine 114 coordinates 5-amino-6-(D-ribitylamino)uracil. Position 128 (arginine 128) interacts with (2S)-2-hydroxy-3-oxobutyl phosphate.

It belongs to the DMRL synthase family.

It catalyses the reaction (2S)-2-hydroxy-3-oxobutyl phosphate + 5-amino-6-(D-ribitylamino)uracil = 6,7-dimethyl-8-(1-D-ribityl)lumazine + phosphate + 2 H2O + H(+). The protein operates within cofactor biosynthesis; riboflavin biosynthesis; riboflavin from 2-hydroxy-3-oxobutyl phosphate and 5-amino-6-(D-ribitylamino)uracil: step 1/2. In terms of biological role, catalyzes the formation of 6,7-dimethyl-8-ribityllumazine by condensation of 5-amino-6-(D-ribitylamino)uracil with 3,4-dihydroxy-2-butanone 4-phosphate. This is the penultimate step in the biosynthesis of riboflavin. This Streptomyces avermitilis (strain ATCC 31267 / DSM 46492 / JCM 5070 / NBRC 14893 / NCIMB 12804 / NRRL 8165 / MA-4680) protein is 6,7-dimethyl-8-ribityllumazine synthase.